The chain runs to 210 residues: Frataxin, mitochondrial (210 aa).

Residues 1–41 constitute a mitochondrion transit peptide; sequence MWTLGRRAVAGLLASPSPAQAQTLTRVPRPAELAPLCGRRG.

The protein belongs to the frataxin family. In terms of assembly, component of the mitochondrial core iron-sulfur cluster (ISC) complex composed of NFS1, LYRM4, NDUFAB1, ISCU, FXN, and FDX2; this complex is a heterohexamer containing two copies of each monomer. Homodimer. Monomer (probable predominant form). Oligomer. Monomers and polymeric aggregates of &gt;1 MDa have been isolated from mitochondria. A small fraction of heterologous overexpressed recombinant frataxin forms high-molecular weight aggregates that incorporate iron. Interacts with LYRM4. Interacts (via ferrous form) with ISCU; the interaction is possible when both are bound to the dimeric form of the cysteine desulfurase complex (NFS1:LYRM4) and the interaction enhances FXN interaction to the dimeric form of the cysteine desulfurase complex (NFS1:LYRM4). Interacts with FECH; one iron-bound FXN monomer seems to interact with a FECH homodimer. Interacts with SDHA and SDHB. Interacts with ACO2; the interaction is dependent on citrate. Interacts with HSPA9. As to quaternary structure, interacts with ACO1. Interacts with ISCU (cytoplasmic form). Post-translationally, processed in two steps by mitochondrial processing peptidase (MPP). MPP first cleaves the precursor to intermediate form and subsequently converts the intermediate to yield frataxin mature form (frataxin(81-210)) which is the predominant form. The additional forms, frataxin(56-210) and frataxin(78-210), seem to be produced when the normal maturation process is impaired; their physiological relevance is unsure. As to expression, expressed in the heart, peripheral blood lymphocytes and dermal fibroblasts.

The protein resides in the mitochondrion. It localises to the cytoplasm. The protein localises to the cytosol. It carries out the reaction 4 Fe(2+) + O2 + 4 H(+) = 4 Fe(3+) + 2 H2O. In terms of biological role, functions as an activator of persulfide transfer to the scaffoding protein ISCU as component of the core iron-sulfur cluster (ISC) assembly complex and participates to the [2Fe-2S] cluster assembly. Accelerates sulfur transfer from NFS1 persulfide intermediate to ISCU and to small thiols such as L-cysteine and glutathione leading to persulfuration of these thiols and ultimately sulfide release. Binds ferrous ion and is released from FXN upon the addition of both L-cysteine and reduced FDX2 during [2Fe-2S] cluster assembly. The core iron-sulfur cluster (ISC) assembly complex is involved in the de novo synthesis of a [2Fe-2S] cluster, the first step of the mitochondrial iron-sulfur protein biogenesis. This process is initiated by the cysteine desulfurase complex (NFS1:LYRM4:NDUFAB1) that produces persulfide which is delivered on the scaffold protein ISCU in a FXN-dependent manner. Then this complex is stabilized by FDX2 which provides reducing equivalents to accomplish the [2Fe-2S] cluster assembly. Finally, the [2Fe-2S] cluster is transferred from ISCU to chaperone proteins, including HSCB, HSPA9 and GLRX5. May play a role in the protection against iron-catalyzed oxidative stress through its ability to catalyze the oxidation of Fe(2+) to Fe(3+); the oligomeric form but not the monomeric form has in vitro ferroxidase activity. May be able to store large amounts of iron in the form of a ferrihydrite mineral by oligomerization; however, the physiological relevance is unsure as reports are conflicting and the function has only been shown using heterologous overexpression systems. May function as an iron chaperone protein that protects the aconitase [4Fe-4S]2+ cluster from disassembly and promotes enzyme reactivation. May play a role as a high affinity iron binding partner for FECH that is capable of both delivering iron to ferrochelatase and mediating the terminal step in mitochondrial heme biosynthesis. Functionally, modulates the RNA-binding activity of ACO1. May be involved in the cytoplasmic iron-sulfur protein biogenesis. May contribute to oxidative stress resistance and overall cell survival. This Homo sapiens (Human) protein is Frataxin, mitochondrial.